The following is a 345-amino-acid chain: Adenosine kinase 2 (345 aa).

The active site involves Asp-300.

This sequence belongs to the carbohydrate kinase PfkB family. As to quaternary structure, interacts with the begomovirus AL2 protein and the curtovirus L2 protein. Interacts with KIN11. The cofactor is Mg(2+). Post-translationally, phosphorylated by KIN11. As to expression, widely expressed.

The protein resides in the cytoplasm. The catalysed reaction is adenosine + ATP = AMP + ADP + H(+). It functions in the pathway purine metabolism; AMP biosynthesis via salvage pathway; AMP from adenosine: step 1/1. Its activity is regulated as follows. Inactivated by the begomovirus AL2 protein or the curtovirus L2 protein. Functionally, ATP dependent phosphorylation of adenosine and other related nucleoside analogs to monophosphate derivatives. Essential to sustain methyl recycling. In Arabidopsis thaliana (Mouse-ear cress), this protein is Adenosine kinase 2.